Here is a 429-residue protein sequence, read N- to C-terminus: Adenylosuccinate synthetase (429 aa).

Residues Gly-12–Lys-18 and Gly-40–Thr-42 each bind GTP. Asp-13 acts as the Proton acceptor in catalysis. Residues Asp-13 and Gly-40 each coordinate Mg(2+). Residues Asp-13–Lys-16, Asn-38–His-41, Thr-129, Arg-143, Gln-223, Thr-238, and Arg-302 each bind IMP. His-41 acts as the Proton donor in catalysis. Thr-298–Arg-304 provides a ligand contact to substrate. GTP-binding positions include Arg-304, Lys-330–Asp-332, and Ser-412–Ser-414.

It belongs to the adenylosuccinate synthetase family. In terms of assembly, homodimer. Mg(2+) serves as cofactor.

It localises to the cytoplasm. The catalysed reaction is IMP + L-aspartate + GTP = N(6)-(1,2-dicarboxyethyl)-AMP + GDP + phosphate + 2 H(+). Its pathway is purine metabolism; AMP biosynthesis via de novo pathway; AMP from IMP: step 1/2. Functionally, plays an important role in the de novo pathway of purine nucleotide biosynthesis. Catalyzes the first committed step in the biosynthesis of AMP from IMP. This is Adenylosuccinate synthetase from Rhodospirillum rubrum (strain ATCC 11170 / ATH 1.1.1 / DSM 467 / LMG 4362 / NCIMB 8255 / S1).